Reading from the N-terminus, the 372-residue chain is tRNA-specific 2-thiouridylase MnmA (372 aa).

ATP contacts are provided by residues 16–23 and M42; that span reads GMSGGVDS. The interval 102–104 is interaction with target base in tRNA; sequence NPD. C107 serves as the catalytic Nucleophile. A disulfide bridge connects residues C107 and C205. Residue G132 coordinates ATP. An interaction with tRNA region spans residues 155–157; the sequence is KDQ. C205 functions as the Cysteine persulfide intermediate in the catalytic mechanism. Residues 317 to 318 are interaction with tRNA; it reads RY.

It belongs to the MnmA/TRMU family.

Its subcellular location is the cytoplasm. The enzyme catalyses S-sulfanyl-L-cysteinyl-[protein] + uridine(34) in tRNA + AH2 + ATP = 2-thiouridine(34) in tRNA + L-cysteinyl-[protein] + A + AMP + diphosphate + H(+). Its function is as follows. Catalyzes the 2-thiolation of uridine at the wobble position (U34) of tRNA, leading to the formation of s(2)U34. This chain is tRNA-specific 2-thiouridylase MnmA, found in Shewanella baltica (strain OS185).